The primary structure comprises 490 residues: Trigger factor (490 aa).

The PPIase FKBP-type domain occupies 161-247 (GDQVIVDIEA…VHEVKEAELP (87 aa)). The segment covering 441–460 (AEPAEGTEPAAEEAVTAPEV) has biased composition (low complexity). A disordered region spans residues 441–490 (AEPAEGTEPAAEEAVTAPEVVDGETTPASESAESLAVTETGSRADDDQAS). Over residues 466-481 (TPASESAESLAVTETG) the composition is skewed to polar residues.

It belongs to the FKBP-type PPIase family. Tig subfamily.

The protein resides in the cytoplasm. It carries out the reaction [protein]-peptidylproline (omega=180) = [protein]-peptidylproline (omega=0). Its function is as follows. Involved in protein export. Acts as a chaperone by maintaining the newly synthesized protein in an open conformation. Functions as a peptidyl-prolyl cis-trans isomerase. This Thermomicrobium roseum (strain ATCC 27502 / DSM 5159 / P-2) protein is Trigger factor.